A 427-amino-acid chain; its full sequence is UPF0229 protein bll6755 (427 aa).

Positions 86–107 (DYLQRSGQGSAKDSGPGEGDSE) are disordered.

The protein belongs to the UPF0229 family.

This Bradyrhizobium diazoefficiens (strain JCM 10833 / BCRC 13528 / IAM 13628 / NBRC 14792 / USDA 110) protein is UPF0229 protein bll6755.